The chain runs to 359 residues: Phosphoserine aminotransferase (359 aa).

Arg-41 provides a ligand contact to L-glutamate. Residues Trp-101, Thr-151, Asp-170, and Gln-193 each coordinate pyridoxal 5'-phosphate. N6-(pyridoxal phosphate)lysine is present on Lys-194. Residue 235-236 (NT) coordinates pyridoxal 5'-phosphate.

It belongs to the class-V pyridoxal-phosphate-dependent aminotransferase family. SerC subfamily. In terms of assembly, homodimer. The cofactor is pyridoxal 5'-phosphate.

Its subcellular location is the cytoplasm. It carries out the reaction O-phospho-L-serine + 2-oxoglutarate = 3-phosphooxypyruvate + L-glutamate. It catalyses the reaction 4-(phosphooxy)-L-threonine + 2-oxoglutarate = (R)-3-hydroxy-2-oxo-4-phosphooxybutanoate + L-glutamate. The protein operates within amino-acid biosynthesis; L-serine biosynthesis; L-serine from 3-phospho-D-glycerate: step 2/3. Its pathway is cofactor biosynthesis; pyridoxine 5'-phosphate biosynthesis; pyridoxine 5'-phosphate from D-erythrose 4-phosphate: step 3/5. In terms of biological role, catalyzes the reversible conversion of 3-phosphohydroxypyruvate to phosphoserine and of 3-hydroxy-2-oxo-4-phosphonooxybutanoate to phosphohydroxythreonine. In Laribacter hongkongensis (strain HLHK9), this protein is Phosphoserine aminotransferase.